Reading from the N-terminus, the 229-residue chain is Germin-like protein 2-4 (229 aa).

An N-terminal signal peptide occupies residues methionine 1–glycine 23. Residues cysteine 32 and cysteine 52 are joined by a disulfide bond. The N-linked (GlcNAc...) asparagine glycan is linked to asparagine 57. Residues serine 66–arginine 213 enclose the Cupin type-1 domain. Residues histidine 115, histidine 117, glutamate 122, and histidine 161 each coordinate Mn(2+).

This sequence belongs to the germin family. Oligomer (believed to be a pentamer but probably hexamer).

The protein resides in the secreted. The protein localises to the extracellular space. It localises to the apoplast. Functionally, may play a role in plant defense. Probably has no oxalate oxidase activity even if the active site is conserved. This is Germin-like protein 2-4 from Oryza sativa subsp. japonica (Rice).